We begin with the raw amino-acid sequence, 223 residues long: Phosphoribosylformylglycinamidine synthase subunit PurQ (223 aa).

A Glutamine amidotransferase type-1 domain is found at 3 to 223 (SAVILLPGLN…LFAGALGITA (221 aa)). Cys-87 acts as the Nucleophile in catalysis. Active-site residues include His-197 and Glu-199.

As to quaternary structure, part of the FGAM synthase complex composed of 1 PurL, 1 PurQ and 2 PurS subunits.

Its subcellular location is the cytoplasm. The catalysed reaction is N(2)-formyl-N(1)-(5-phospho-beta-D-ribosyl)glycinamide + L-glutamine + ATP + H2O = 2-formamido-N(1)-(5-O-phospho-beta-D-ribosyl)acetamidine + L-glutamate + ADP + phosphate + H(+). It carries out the reaction L-glutamine + H2O = L-glutamate + NH4(+). The protein operates within purine metabolism; IMP biosynthesis via de novo pathway; 5-amino-1-(5-phospho-D-ribosyl)imidazole from N(2)-formyl-N(1)-(5-phospho-D-ribosyl)glycinamide: step 1/2. Functionally, part of the phosphoribosylformylglycinamidine synthase complex involved in the purines biosynthetic pathway. Catalyzes the ATP-dependent conversion of formylglycinamide ribonucleotide (FGAR) and glutamine to yield formylglycinamidine ribonucleotide (FGAM) and glutamate. The FGAM synthase complex is composed of three subunits. PurQ produces an ammonia molecule by converting glutamine to glutamate. PurL transfers the ammonia molecule to FGAR to form FGAM in an ATP-dependent manner. PurS interacts with PurQ and PurL and is thought to assist in the transfer of the ammonia molecule from PurQ to PurL. The chain is Phosphoribosylformylglycinamidine synthase subunit PurQ from Brucella suis biovar 1 (strain 1330).